The following is a 569-amino-acid chain: Urease subunit beta (569 aa).

Positions 131–569 (GGIDTHIHFI…VSLAQLFSIF (439 aa)) constitute a Urease domain. The Ni(2+) site is built by H136, H138, and K219. K219 is modified (N6-carboxylysine). H221 is a binding site for substrate. The Ni(2+) site is built by H248 and H274. H322 functions as the Proton donor in the catalytic mechanism. D362 contacts Ni(2+).

It belongs to the metallo-dependent hydrolases superfamily. Urease alpha subunit family. As to quaternary structure, heterohexamer of 3 UreA (alpha) and 3 UreB (beta) subunits. Requires Ni cation as cofactor. Carboxylation allows a single lysine to coordinate two nickel ions.

The protein resides in the cytoplasm. It carries out the reaction urea + 2 H2O + H(+) = hydrogencarbonate + 2 NH4(+). It functions in the pathway nitrogen metabolism; urea degradation; CO(2) and NH(3) from urea (urease route): step 1/1. The sequence is that of Urease subunit beta from Helicobacter pylori (strain Shi470).